Reading from the N-terminus, the 496-residue chain is Probable cytosol aminopeptidase (496 aa).

Lys-262 and Asp-267 together coordinate Mn(2+). Lys-274 is a catalytic residue. 3 residues coordinate Mn(2+): Asp-285, Asp-344, and Glu-346. Residue Arg-348 is part of the active site.

The protein belongs to the peptidase M17 family. It depends on Mn(2+) as a cofactor.

The protein localises to the cytoplasm. The enzyme catalyses Release of an N-terminal amino acid, Xaa-|-Yaa-, in which Xaa is preferably Leu, but may be other amino acids including Pro although not Arg or Lys, and Yaa may be Pro. Amino acid amides and methyl esters are also readily hydrolyzed, but rates on arylamides are exceedingly low.. The catalysed reaction is Release of an N-terminal amino acid, preferentially leucine, but not glutamic or aspartic acids.. Its function is as follows. Presumably involved in the processing and regular turnover of intracellular proteins. Catalyzes the removal of unsubstituted N-terminal amino acids from various peptides. This chain is Probable cytosol aminopeptidase, found in Rhizobium leguminosarum bv. trifolii (strain WSM2304).